The primary structure comprises 155 residues: Ribosomal RNA large subunit methyltransferase H (155 aa).

S-adenosyl-L-methionine is bound by residues Leu72, Gly103, and 122-127 (LSALTL).

The protein belongs to the RNA methyltransferase RlmH family. Homodimer.

It localises to the cytoplasm. It catalyses the reaction pseudouridine(1915) in 23S rRNA + S-adenosyl-L-methionine = N(3)-methylpseudouridine(1915) in 23S rRNA + S-adenosyl-L-homocysteine + H(+). In terms of biological role, specifically methylates the pseudouridine at position 1915 (m3Psi1915) in 23S rRNA. The polypeptide is Ribosomal RNA large subunit methyltransferase H (Cronobacter sakazakii (strain ATCC BAA-894) (Enterobacter sakazakii)).